The chain runs to 283 residues: NAD kinase (283 aa).

The Proton acceptor role is filled by Asp-69. NAD(+) contacts are provided by residues Asp-69 to Gly-70, Asn-138 to Glu-139, Lys-166, Asp-168, Leu-176, Thr-179 to Ser-184, and Gln-235.

The protein belongs to the NAD kinase family. It depends on a divalent metal cation as a cofactor.

Its subcellular location is the cytoplasm. It carries out the reaction NAD(+) + ATP = ADP + NADP(+) + H(+). Functionally, involved in the regulation of the intracellular balance of NAD and NADP, and is a key enzyme in the biosynthesis of NADP. Catalyzes specifically the phosphorylation on 2'-hydroxyl of the adenosine moiety of NAD to yield NADP. The chain is NAD kinase from Helicobacter acinonychis (strain Sheeba).